A 165-amino-acid polypeptide reads, in one-letter code: Phosphopantetheine adenylyltransferase (165 aa).

Threonine 9 contributes to the substrate binding site. ATP-binding positions include 9 to 10 and histidine 17; that span reads TF. Substrate contacts are provided by lysine 41, leucine 73, and arginine 87. ATP is bound by residues 88-90, glutamate 98, and 123-129; these read GLR and LQPIASR.

This sequence belongs to the bacterial CoaD family. As to quaternary structure, homohexamer. The cofactor is Mg(2+).

The protein resides in the cytoplasm. The enzyme catalyses (R)-4'-phosphopantetheine + ATP + H(+) = 3'-dephospho-CoA + diphosphate. Its pathway is cofactor biosynthesis; coenzyme A biosynthesis; CoA from (R)-pantothenate: step 4/5. Functionally, reversibly transfers an adenylyl group from ATP to 4'-phosphopantetheine, yielding dephospho-CoA (dPCoA) and pyrophosphate. This Rhizorhabdus wittichii (strain DSM 6014 / CCUG 31198 / JCM 15750 / NBRC 105917 / EY 4224 / RW1) (Sphingomonas wittichii) protein is Phosphopantetheine adenylyltransferase.